The sequence spans 178 residues: Probable DNA-directed RNA polymerase subunit delta (178 aa).

An HTH HARE-type domain is found at 14–81; the sequence is KSFIDMAYTL…GENLWGLRDW (68 aa). A disordered region spans residues 114–178; sequence LGDDDADEDD…AFEDAEDFND (65 aa). Acidic residues predominate over residues 116–178; it reads DDDADEDDDI…AFEDAEDFND (63 aa).

This sequence belongs to the RpoE family. RNAP is composed of a core of 2 alpha, a beta and a beta' subunits. The core is associated with a delta subunit and one of several sigma factors.

Functionally, participates in both the initiation and recycling phases of transcription. In the presence of the delta subunit, RNAP displays an increased specificity of transcription, a decreased affinity for nucleic acids, and an increased efficiency of RNA synthesis because of enhanced recycling. The protein is Probable DNA-directed RNA polymerase subunit delta of Staphylococcus epidermidis (strain ATCC 35984 / DSM 28319 / BCRC 17069 / CCUG 31568 / BM 3577 / RP62A).